Reading from the N-terminus, the 613-residue chain is Dihydroxy-acid dehydratase (613 aa).

Aspartate 81 is a binding site for Mg(2+). Cysteine 122 contributes to the [2Fe-2S] cluster binding site. The Mg(2+) site is built by aspartate 123 and lysine 124. At lysine 124 the chain carries N6-carboxylysine. Cysteine 195 serves as a coordination point for [2Fe-2S] cluster. Glutamate 491 is a Mg(2+) binding site. Serine 517 functions as the Proton acceptor in the catalytic mechanism.

Belongs to the IlvD/Edd family. As to quaternary structure, homodimer. [2Fe-2S] cluster is required as a cofactor. It depends on Mg(2+) as a cofactor.

The enzyme catalyses (2R)-2,3-dihydroxy-3-methylbutanoate = 3-methyl-2-oxobutanoate + H2O. It catalyses the reaction (2R,3R)-2,3-dihydroxy-3-methylpentanoate = (S)-3-methyl-2-oxopentanoate + H2O. It functions in the pathway amino-acid biosynthesis; L-isoleucine biosynthesis; L-isoleucine from 2-oxobutanoate: step 3/4. Its pathway is amino-acid biosynthesis; L-valine biosynthesis; L-valine from pyruvate: step 3/4. Functionally, functions in the biosynthesis of branched-chain amino acids. Catalyzes the dehydration of (2R,3R)-2,3-dihydroxy-3-methylpentanoate (2,3-dihydroxy-3-methylvalerate) into 2-oxo-3-methylpentanoate (2-oxo-3-methylvalerate) and of (2R)-2,3-dihydroxy-3-methylbutanoate (2,3-dihydroxyisovalerate) into 2-oxo-3-methylbutanoate (2-oxoisovalerate), the penultimate precursor to L-isoleucine and L-valine, respectively. This is Dihydroxy-acid dehydratase from Hyphomonas neptunium (strain ATCC 15444).